The chain runs to 1151 residues: Phospholipid-transporting ATPase NEO1 (1151 aa).

2 disordered regions span residues Met-1–Gln-21 and Leu-73–Leu-95. Residues Met-1 to Thr-184 are Extracellular-facing. Residues Gln-12 to Gln-21 show a composition bias toward polar residues. The tract at residues Glu-51–Asp-104 is required for endosome-to-Golgi sorting. A Phosphoserine modification is found at Ser-102. A helical transmembrane segment spans residues Phe-185–Val-205. Residues Ala-206–Gln-209 are Cytoplasmic-facing. A helical transmembrane segment spans residues Ala-210 to Leu-230. Residues Thr-231 to Thr-367 lie on the Extracellular side of the membrane. Residues Leu-368–Gly-388 form a helical membrane-spanning segment. Topologically, residues Arg-389 to Lys-416 are cytoplasmic. The helical transmembrane segment at Ile-417–Asn-437 threads the bilayer. Asp-438 is a topological domain (extracellular). Residues Asp-439–Leu-459 form a helical membrane-spanning segment. Topologically, residues Arg-460–Gly-947 are cytoplasmic. Asp-503 serves as the catalytic 4-aspartylphosphate intermediate. Positions 503, 504, and 505 each coordinate ATP. Asp-503 provides a ligand contact to Mg(2+). Thr-505 serves as a coordination point for Mg(2+). Residue Ser-551 is modified to Phosphoserine. Glu-597, Phe-640, Ser-642, Lys-645, Lys-664, Arg-693, Thr-694, Thr-774, Gly-775, Asp-776, Arg-856, and Lys-862 together coordinate ATP. Asp-882 contributes to the Mg(2+) binding site. The ATP site is built by Asn-885 and Asp-886. Mg(2+) is bound at residue Asp-886. The helical transmembrane segment at Leu-948–Leu-968 threads the bilayer. Residues Tyr-969 to Gln-970 lie on the Extracellular side of the membrane. A helical transmembrane segment spans residues Gly-971–Leu-991. Residues Asp-992–Thr-1020 lie on the Cytoplasmic side of the membrane. A helical membrane pass occupies residues Phe-1021 to Ala-1041. The Extracellular portion of the chain corresponds to Phe-1042–Arg-1052. A helical membrane pass occupies residues Met-1053 to Ile-1073. The Cytoplasmic segment spans residues Tyr-1074–Lys-1078. Residues Thr-1079 to Gly-1099 form a helical membrane-spanning segment. At Asp-1100 to Thr-1109 the chain is on the extracellular side. A helical membrane pass occupies residues Val-1110 to Ala-1130. The Cytoplasmic portion of the chain corresponds to Lys-1131–Pro-1151. The required for endosomal targeting stretch occupies residues Lys-1131–Pro-1151.

It belongs to the cation transport ATPase (P-type) (TC 3.A.3) family. Type IV subfamily. Interacts with MON2. Interacts with ANY1. Functions without a CDC50/LEM3 family accessory subunit. Mg(2+) serves as cofactor.

The protein localises to the endosome membrane. The protein resides in the golgi apparatus membrane. It carries out the reaction ATP + H2O + phospholipidSide 1 = ADP + phosphate + phospholipidSide 2.. It catalyses the reaction a 1,2-diacyl-sn-glycero-3-phospho-L-serine(out) + ATP + H2O = a 1,2-diacyl-sn-glycero-3-phospho-L-serine(in) + ADP + phosphate + H(+). The enzyme catalyses a 1,2-diacyl-sn-glycero-3-phosphoethanolamine(out) + ATP + H2O = a 1,2-diacyl-sn-glycero-3-phosphoethanolamine(in) + ADP + phosphate + H(+). Its function is as follows. Flippase that catalyzes the hydrolysis of ATP coupled to the transport of lysophosphatidylserine, phosphatidylethanolamine, and phosphatidylserine from the lumenal to the cytosolic leaflet of the Golgi apparatus membrane and ensures the maintenance of asymmetric distribution of phospholipids. Does not appear to transport phosphatidylcholine or sphingomyelin. May be involved in recycling from endosomes by driving the formation of SNX3-dependent recycling tubules. Required for COPI retrograde transport from the Golgi to the endoplasmic reticulum, Golgi-endosome trafficking, and Golgi-dependent protein glycosylation. The protein is Phospholipid-transporting ATPase NEO1 of Saccharomyces cerevisiae (strain ATCC 204508 / S288c) (Baker's yeast).